The following is a 959-amino-acid chain: Translation initiation factor IF-2 (959 aa).

Basic and acidic residues predominate over residues 1–10; sequence MSDKTNDDKT. A disordered region spans residues 1–374; sequence MSDKTNDDKT…SQMQETREKI (374 aa). The segment covering 27-37 has biased composition (polar residues); sequence EQSTVRQNFSH. Composition is skewed to low complexity over residues 63–118 and 128–138; these read AAAA…VTKP and QRPGGQQAQRP. Composition is skewed to basic and acidic residues over residues 154–225 and 232–241; these read SEMD…EAAK and ARSERRDDAR. Low complexity predominate over residues 246-284; the sequence is GARPQQAGRPQGGRPQPAGRPQQGSPRPAPIIADAAPIA. Residues 318 to 333 are compositionally biased toward basic and acidic residues; sequence PEVRAPKVVKGEDDRR. One can recognise a tr-type G domain in the interval 457–626; it reads SRPPVVTIMG…LLQAEMLDLK (170 aa). The interval 466 to 473 is G1; it reads GHVDHGKT. 466–473 lines the GTP pocket; the sequence is GHVDHGKT. The segment at 491 to 495 is G2; that stretch reads GITQH. The interval 512–515 is G3; that stretch reads DTPG. Residues 512-516 and 566-569 each bind GTP; these read DTPGH and NKID. The tract at residues 566–569 is G4; sequence NKID. Residues 602–604 form a G5 region; it reads SAK.

Belongs to the TRAFAC class translation factor GTPase superfamily. Classic translation factor GTPase family. IF-2 subfamily.

It localises to the cytoplasm. One of the essential components for the initiation of protein synthesis. Protects formylmethionyl-tRNA from spontaneous hydrolysis and promotes its binding to the 30S ribosomal subunits. Also involved in the hydrolysis of GTP during the formation of the 70S ribosomal complex. The chain is Translation initiation factor IF-2 from Brucella melitensis biotype 1 (strain ATCC 23456 / CCUG 17765 / NCTC 10094 / 16M).